The primary structure comprises 201 residues: MYB-like transcription factor EOBI (201 aa).

HTH myb-type domains are found at residues 10-62 (DVEV…LNYL) and 63-117 (RPDV…QKHI). 2 DNA-binding regions (H-T-H motif) span residues 38–62 (WNSL…LNYL) and 90–113 (WSKI…RTRI). Residues 121–170 (DQNMKKPSKCEQNDQKAISTSQASTGPTDTIDSYSPSSYTENTNNNMENI) form a disordered region. The segment covering 135-159 (QKAISTSQASTGPTDTIDSYSPSSY) has biased composition (polar residues). Positions 160–169 (TENTNNNMEN) are enriched in low complexity.

In terms of tissue distribution, expressed exclusively in flower organs. Accumulates mostly in flower limbs, to a lower extent in pistils and flower tubes, and, at low levels, in stamens.

It localises to the nucleus. MYB-type transcription factor controlling the production of volatile organic compounds (VOCs), including floral volatile benzenoids and phenylpropanoids (FVBP), in flowers of fragrant cultivars (e.g. cv. Mitchell and cv. V26) by regulating the expression of ODO1, a key regulator of the shikimate pathway, and of several biosynthetic floral scent-related genes (e.g. IGS, EGS, BSMT1, BSMT2, PAL1, PAL2, EPSPS, DAHPS, CS, CM1, ADT1 and PPA-AT). Binds to and activates the promoters of at least ODO1, IGS1 and PAL1. The polypeptide is MYB-like transcription factor EOBI (Petunia hybrida (Petunia)).